Consider the following 505-residue polypeptide: Peroxisome proliferator-activated receptor gamma (505 aa).

The tract at residues 1-26 (MGETLGDSLIDPESDSFADTLSASTS) is disordered. Over residues 17–26 (FADTLSASTS) the composition is skewed to polar residues. Ser-112 bears the Phosphoserine; by MAPK mark. The nuclear receptor DNA-binding region spans 136 to 210 (AIECRVCGDK…VGMSHNAIRF (75 aa)). NR C4-type zinc fingers lie at residues 139–159 (CRVC…CEGC) and 176–198 (CDLN…FQKC). Residues 205 to 280 (HNAIRFGRMP…DKSPFVIYDM (76 aa)) form an interaction with FAM120B region. Positions 238–503 (DLRALAKHLY…HPLLQEIYKD (266 aa)) constitute an NR LBD domain. Lys-252 participates in a covalent cross-link: Glycyl lysine isopeptide (Lys-Gly) (interchain with G-Cter in ubiquitin). The short motif at 495–503 (PLLQEIYKD) is the 9aaTAD element.

The protein belongs to the nuclear hormone receptor family. NR1 subfamily. Interacts with FOXO1 (acetylated form). Heterodimer with other nuclear receptors, such as RXRA. The heterodimer with the retinoic acid receptor RXRA is called adipocyte-specific transcription factor ARF6. Interacts with NCOA6 coactivator, leading to a strong increase in transcription of target genes. Interacts with coactivator PPARBP, leading to a mild increase in transcription of target genes. Interacts with NOCA7 in a ligand-inducible manner. Interacts with NCOA1 and NCOA2 LXXLL motifs. Interacts with ASXL1, ASXL2, DNTTIP2, FAM120B, MAP2K1/MEK1, NR0B2, PDPK1, PRDM16, PRMT2 and TGFB1I1. Interacts (when activated by agonist) with PPP5C. Interacts with HELZ2 and THRAP3; the interaction stimulates the transcriptional activity of PPARG. Interacts with PER2, the interaction is ligand dependent and blocks PPARG recruitment to target promoters. Interacts with NOCT. Interacts with ACTN4. Interacts (when in the liganded conformation) with GPS2. Interacts with CRY1 and CRY2 in a ligand-dependent manner. In the absence of hormonal ligand, interacts with TACC1. In macrophages, interacts with PAQR3 and STUB1; the interactions promote PPARG poylubiquitination and STUB1-mediated degradation. Post-translationally, phosphorylated at basal conditions and dephosphorylated when treated with the ligand. May be dephosphorylated by PPP5C. The phosphorylated form may be inactive and dephosphorylation induces adipogenic activity. Ubiquitinated by E3 ubiquitin-protein ligase complex containing FBXO9; leading to proteasomal degradation. Ubiquitinated at Lys-252 by TRIM55 leading to proteasomal degradation. Ubiquitinated by E3 ubiquitin-protein ligase STUB1/CHIP; leading to proteasomal degradation.

The protein localises to the nucleus. The protein resides in the cytoplasm. Its activity is regulated as follows. PDPK1 activates its transcriptional activity independently of its kinase activity. In terms of biological role, nuclear receptor that binds peroxisome proliferators such as hypolipidemic drugs and fatty acids. Once activated by a ligand, the nuclear receptor binds to DNA specific PPAR response elements (PPRE) and modulates the transcription of its target genes, such as acyl-CoA oxidase. It therefore controls the peroxisomal beta-oxidation pathway of fatty acids. Key regulator of adipocyte differentiation and glucose homeostasis. ARF6 acts as a key regulator of the tissue-specific adipocyte P2 (aP2) enhancer. Acts as a critical regulator of gut homeostasis by suppressing NF-kappa-B-mediated pro-inflammatory responses. Plays a role in the regulation of cardiovascular circadian rhythms by regulating the transcription of BMAL1 in the blood vessels. The chain is Peroxisome proliferator-activated receptor gamma (PPARG) from Canis lupus familiaris (Dog).